Here is a 290-residue protein sequence, read N- to C-terminus: 3-deoxy-manno-octulosonate cytidylyltransferase, mitochondrial (290 aa).

The N-terminal 50 residues, 1 to 50, are a transit peptide targeting the mitochondrion; it reads MSVCSSSSSSQKTWIVNGILAGTAIAAAIGARAYLGRSKKFRSRVVGIIP.

The protein belongs to the KdsB family. Requires Mg(2+) as cofactor. In terms of tissue distribution, expressed in roots, leaves, stems and siliques.

The protein localises to the mitochondrion outer membrane. It catalyses the reaction 3-deoxy-alpha-D-manno-oct-2-ulosonate + CTP = CMP-3-deoxy-beta-D-manno-octulosonate + diphosphate. It participates in nucleotide-sugar biosynthesis; CMP-3-deoxy-D-manno-octulosonate biosynthesis; CMP-3-deoxy-D-manno-octulosonate from 3-deoxy-D-manno-octulosonate and CTP: step 1/1. With respect to regulation, inhibited by 2beta-deoxy-Kdo. Catalyzes the production of the sugar nucleotide CMP-3-deoxy-D-manno-octulosonate (CMP-KDO). CTP is the preferred nucleotide donor, but it can partially be replaced with UTP. Activates KDO during the biosynthesis of rhamnogalacturonan II (RG-II), a structurally complex pectic polysaccharide of the primary cell wall. RG-II is essential for the cell wall integrity of rapidly growing tissues and pollen tube growth and elongation. This Arabidopsis thaliana (Mouse-ear cress) protein is 3-deoxy-manno-octulosonate cytidylyltransferase, mitochondrial.